Reading from the N-terminus, the 356-residue chain is Methylthioribose-1-phosphate isomerase (356 aa).

Substrate is bound by residues 53-55 (RGA), Arg97, and Gln203. Asp244 functions as the Proton donor in the catalytic mechanism. 254-255 (NK) lines the substrate pocket.

It belongs to the eIF-2B alpha/beta/delta subunits family. MtnA subfamily.

It catalyses the reaction 5-(methylsulfanyl)-alpha-D-ribose 1-phosphate = 5-(methylsulfanyl)-D-ribulose 1-phosphate. The protein operates within amino-acid biosynthesis; L-methionine biosynthesis via salvage pathway; L-methionine from S-methyl-5-thio-alpha-D-ribose 1-phosphate: step 1/6. Its function is as follows. Catalyzes the interconversion of methylthioribose-1-phosphate (MTR-1-P) into methylthioribulose-1-phosphate (MTRu-1-P). The polypeptide is Methylthioribose-1-phosphate isomerase (Rhodopirellula baltica (strain DSM 10527 / NCIMB 13988 / SH1)).